The sequence spans 165 residues: Thiol peroxidase (165 aa).

The 148-residue stretch at 18 to 165 folds into the Thioredoxin domain; it reads PQVGDVVTDF…PNYDAALAVL (148 aa). Residue Cys60 is the Cysteine sulfenic acid (-SOH) intermediate of the active site. A disulfide bond links Cys60 and Cys94.

The protein belongs to the peroxiredoxin family. Tpx subfamily. In terms of assembly, homodimer.

It catalyses the reaction a hydroperoxide + [thioredoxin]-dithiol = an alcohol + [thioredoxin]-disulfide + H2O. Its function is as follows. Thiol-specific peroxidase that catalyzes the reduction of hydrogen peroxide and organic hydroperoxides to water and alcohols, respectively. Plays a role in cell protection against oxidative stress by detoxifying peroxides. This Pasteurella multocida (strain Pm70) protein is Thiol peroxidase.